Reading from the N-terminus, the 750-residue chain is Iron-sulfur clusters transporter ATM1, mitochondrial (750 aa).

The transit peptide at 1-16 (MFIRNVKLIKPSPVRF) directs the protein to the mitochondrion. Residues 17 to 124 (ISPIPFSFPI…PKNNLNFKIR (108 aa)) are Mitochondrial matrix-facing. Composition is skewed to low complexity over residues 43-75 (TSNF…KTLS) and 87-100 (DNDT…SSEN). A disordered region spans residues 43–100 (TSNFKSTSSSSSLKSTSTSTSTSTSKTTPKTLSKPPPKVKPPIQDNDTTSSGSSSSEN). A helical transmembrane segment spans residues 125–146 (VIIALSLLVGAKILNVQVPFYF). In terms of domain architecture, ABC transmembrane type-1 spans 125 to 415 (VIIALSLLVG…LGSVYRELKQ (291 aa)). Residues 147-169 (KQIIDTMNIDWTNEVGVFSTVIG) are Mitochondrial intermembrane-facing. Residues 170–193 (SLILAYGGARFGAVLFGELRNAIF) form a helical membrane-spanning segment. Over 194 to 242 (ASVAQSAIRRVAYNTFVKLLNMDLQFHLSRQTGGLTRAIDRGTKGISYV) the chain is Mitochondrial matrix. The chain crosses the membrane as a helical span at residues 243–266 (LSAMVFHIIPITLEISIVCGILTY). A topological domain (mitochondrial intermembrane) is located at residue N267. Residues 268-288 (YGASFAAMTFVTMLAYSIFTI) form a helical membrane-spanning segment. Topologically, residues 289–354 (QTTAWRTKFR…SSVKIATSLA (66 aa)) are mitochondrial matrix. Glutathione-binding positions include 294–298 (RTKFR) and 357–360 (NSGQ). Residues 355 to 373 (FLNSGQNFIFTSALTAMMY) form a helical membrane-spanning segment. At 374–388 (MGCQGVYTGELTVGD) the chain is on the mitochondrial intermembrane side. Residues 389–410 (LVLINQLVFQLSVPLNFLGSVY) form a helical membrane-spanning segment. G407 provides a ligand contact to glutathione. The Mitochondrial matrix segment spans residues 411–750 (RELKQSLLDM…LFNSQTFEKK (340 aa)). The tract at residues 437-462 (PNAPPLKLNNNNNNNNNNNNNNNNSL) is disordered. The segment covering 445–460 (NNNNNNNNNNNNNNNN) has biased composition (low complexity). The ABC transporter domain occupies 466 to 702 (IRFENVSFGY…QPNSLYAQLW (237 aa)). ATP-binding positions include Y475 and 499-510 (GPSGSGKSTILR).

The protein belongs to the ABC transporter superfamily. ABCB family. Heavy Metal importer (TC 3.A.1.210) subfamily. In terms of assembly, homodimer.

It is found in the mitochondrion inner membrane. Functionally, performs an essential function in the generation of cytoplasmic iron-sulfur proteins by mediating the ATP-dependent export of Fe/S cluster precursors synthesized by NFS1 and other mitochondrial proteins. Hydrolyzes ATP. Binds glutathione and may function by transporting a glutathione-conjugated iron-sulfur compound. This Candida albicans (strain SC5314 / ATCC MYA-2876) (Yeast) protein is Iron-sulfur clusters transporter ATM1, mitochondrial.